A 284-amino-acid polypeptide reads, in one-letter code: 2-dehydro-3-deoxyphosphooctonate aldolase (284 aa).

The protein belongs to the KdsA family.

It localises to the cytoplasm. It catalyses the reaction D-arabinose 5-phosphate + phosphoenolpyruvate + H2O = 3-deoxy-alpha-D-manno-2-octulosonate-8-phosphate + phosphate. It participates in carbohydrate biosynthesis; 3-deoxy-D-manno-octulosonate biosynthesis; 3-deoxy-D-manno-octulosonate from D-ribulose 5-phosphate: step 2/3. Its pathway is bacterial outer membrane biogenesis; lipopolysaccharide biosynthesis. The chain is 2-dehydro-3-deoxyphosphooctonate aldolase from Haemophilus influenzae (strain PittEE).